The following is a 275-amino-acid chain: NH(3)-dependent NAD(+) synthetase (275 aa).

Residue 46–53 (GISGGQDS) coordinates ATP. Aspartate 52 is a binding site for Mg(2+). Residue arginine 140 participates in deamido-NAD(+) binding. Threonine 160 is an ATP binding site. A Mg(2+)-binding site is contributed by glutamate 165. Deamido-NAD(+) is bound by residues lysine 173 and aspartate 180. The ATP site is built by lysine 189 and threonine 211. Residue 260–261 (HK) coordinates deamido-NAD(+).

The protein belongs to the NAD synthetase family. Homodimer.

The enzyme catalyses deamido-NAD(+) + NH4(+) + ATP = AMP + diphosphate + NAD(+) + H(+). Its pathway is cofactor biosynthesis; NAD(+) biosynthesis; NAD(+) from deamido-NAD(+) (ammonia route): step 1/1. Its function is as follows. Catalyzes the ATP-dependent amidation of deamido-NAD to form NAD. Uses ammonia as a nitrogen source. The polypeptide is NH(3)-dependent NAD(+) synthetase (Shigella flexneri serotype 5b (strain 8401)).